Here is a 427-residue protein sequence, read N- to C-terminus: MKLRTNAGPLQGTIQVPGDKSISHRAVILGAVAKGETRVKGLLKGEDVLSTIQAFRNLGVRIEEKDDQLVIEGQGFQGLTAPCQTLNMGNSGTSMRLIAGLLAGQPFSVKMIGDESLSKRPMDRIVYPLKQMGVEISGETDRQFPPLQLQGNRNLQPITYTLPISSAQVKSAILLAALQAKGTTQVVEKEITRNHTEEMIQQFGGRLIVDGKRITLVGPQQLTAQEITVPGDISSAAFWLVAGLIIPGSELLLKNVGVNPTRTGILEVVEKMGAQIVYEDMNKKEQVTSIRVVYSHLKGTIISGGLIPRLIDELPIIALLATQAQGTTCIKDAQELRVKETDRIQVVTDILNSMGANIKATADGMIIKGPTVLYGANTSTYGDHRIGMMTAIAALLVKQGQVHLDKEEAIMTSYPTFFKDLERLCHD.

3 residues coordinate 3-phosphoshikimate: Lys-20, Ser-21, and Arg-25. Lys-20 serves as a coordination point for phosphoenolpyruvate. Phosphoenolpyruvate-binding residues include Gly-92 and Arg-120. 3-phosphoshikimate-binding residues include Ser-166, Gln-168, Asp-312, and Lys-339. Position 168 (Gln-168) interacts with phosphoenolpyruvate. Residue Asp-312 is the Proton acceptor of the active site. Residues Arg-343 and Arg-385 each contribute to the phosphoenolpyruvate site.

It belongs to the EPSP synthase family. As to quaternary structure, monomer.

It is found in the cytoplasm. The catalysed reaction is 3-phosphoshikimate + phosphoenolpyruvate = 5-O-(1-carboxyvinyl)-3-phosphoshikimate + phosphate. It participates in metabolic intermediate biosynthesis; chorismate biosynthesis; chorismate from D-erythrose 4-phosphate and phosphoenolpyruvate: step 6/7. Catalyzes the transfer of the enolpyruvyl moiety of phosphoenolpyruvate (PEP) to the 5-hydroxyl of shikimate-3-phosphate (S3P) to produce enolpyruvyl shikimate-3-phosphate and inorganic phosphate. This Streptococcus pyogenes serotype M28 (strain MGAS6180) protein is 3-phosphoshikimate 1-carboxyvinyltransferase.